Consider the following 163-residue polypeptide: Nucleotide-binding protein Mvan_0997 (163 aa).

The protein belongs to the YajQ family.

Its function is as follows. Nucleotide-binding protein. The sequence is that of Nucleotide-binding protein Mvan_0997 from Mycolicibacterium vanbaalenii (strain DSM 7251 / JCM 13017 / BCRC 16820 / KCTC 9966 / NRRL B-24157 / PYR-1) (Mycobacterium vanbaalenii).